The sequence spans 452 residues: THO complex subunit 5A (452 aa).

The protein belongs to the THOC5 family. Component of the THO complex, which is composed of THO1, THO2, THO3, THO5, THO6 and THO7.

The protein resides in the nucleus. In terms of biological role, acts as a component of the THO subcomplex of the TREX complex which is thought to couple mRNA transcription, processing and nuclear export. In Arabidopsis thaliana (Mouse-ear cress), this protein is THO complex subunit 5A (THO5A).